The primary structure comprises 601 residues: 1-deoxy-D-xylulose-5-phosphate synthase (601 aa).

Thiamine diphosphate contacts are provided by residues His63 and 104–106; that span reads GHS. A Mg(2+)-binding site is contributed by Asp135. Thiamine diphosphate-binding positions include 136 to 137, Asn164, Tyr272, and Glu353; that span reads GS. Position 164 (Asn164) interacts with Mg(2+).

This sequence belongs to the transketolase family. DXPS subfamily. In terms of assembly, homodimer. Mg(2+) serves as cofactor. It depends on thiamine diphosphate as a cofactor.

The catalysed reaction is D-glyceraldehyde 3-phosphate + pyruvate + H(+) = 1-deoxy-D-xylulose 5-phosphate + CO2. The protein operates within metabolic intermediate biosynthesis; 1-deoxy-D-xylulose 5-phosphate biosynthesis; 1-deoxy-D-xylulose 5-phosphate from D-glyceraldehyde 3-phosphate and pyruvate: step 1/1. In terms of biological role, catalyzes the acyloin condensation reaction between C atoms 2 and 3 of pyruvate and glyceraldehyde 3-phosphate to yield 1-deoxy-D-xylulose-5-phosphate (DXP). This Aliarcobacter butzleri (strain RM4018) (Arcobacter butzleri) protein is 1-deoxy-D-xylulose-5-phosphate synthase.